The primary structure comprises 410 residues: Arginine deiminase (410 aa).

The active-site Amidino-cysteine intermediate is C400.

It belongs to the arginine deiminase family.

It localises to the cytoplasm. The catalysed reaction is L-arginine + H2O = L-citrulline + NH4(+). It participates in amino-acid degradation; L-arginine degradation via ADI pathway; carbamoyl phosphate from L-arginine: step 1/2. This is Arginine deiminase (arcA) from Borreliella burgdorferi (strain ATCC 35210 / DSM 4680 / CIP 102532 / B31) (Borrelia burgdorferi).